A 128-amino-acid polypeptide reads, in one-letter code: Large ribosomal subunit protein bL12 (128 aa).

It belongs to the bacterial ribosomal protein bL12 family. As to quaternary structure, homodimer. Part of the ribosomal stalk of the 50S ribosomal subunit. Forms a multimeric L10(L12)X complex, where L10 forms an elongated spine to which 2 to 4 L12 dimers bind in a sequential fashion. Binds GTP-bound translation factors.

Forms part of the ribosomal stalk which helps the ribosome interact with GTP-bound translation factors. Is thus essential for accurate translation. In Petrotoga mobilis (strain DSM 10674 / SJ95), this protein is Large ribosomal subunit protein bL12.